Here is a 241-residue protein sequence, read N- to C-terminus: Small ribosomal subunit protein uS2 (241 aa).

Belongs to the universal ribosomal protein uS2 family.

This chain is Small ribosomal subunit protein uS2, found in Glaesserella parasuis serovar 5 (strain SH0165) (Haemophilus parasuis).